The following is a 270-amino-acid chain: Undecaprenyl-diphosphatase 1 (270 aa).

6 consecutive transmembrane segments (helical) span residues 79-99 (NLLL…LLFS), 105-125 (VLFN…IILW), 155-175 (LALI…LFLG), 182-202 (TEFS…YSLI), 215-235 (VFAV…RALL), and 242-262 (SFAV…GTWW).

This sequence belongs to the UppP family.

The protein localises to the cell inner membrane. The catalysed reaction is di-trans,octa-cis-undecaprenyl diphosphate + H2O = di-trans,octa-cis-undecaprenyl phosphate + phosphate + H(+). Its function is as follows. Catalyzes the dephosphorylation of undecaprenyl diphosphate (UPP). Confers resistance to bacitracin. This Chromobacterium violaceum (strain ATCC 12472 / DSM 30191 / JCM 1249 / CCUG 213 / NBRC 12614 / NCIMB 9131 / NCTC 9757 / MK) protein is Undecaprenyl-diphosphatase 1.